We begin with the raw amino-acid sequence, 1026 residues long: Multidrug resistance protein MdtC (1026 aa).

The next 11 helical transmembrane spans lie at 15–35, 333–353, 360–380, 387–407, 431–451, 463–483, 528–548, 853–873, 897–917, 953–973, and 984–1004; these read ILIA…LPVA, EVEE…FLFL, LIPA…MYLC, LSLM…IVVL, VGFT…PLLL, FAVT…TLTP, LVGV…IAIP, LILI…LYES, LFNA…IGIV, PIMM…LSGG, and ITIV…TPVV.

The protein belongs to the resistance-nodulation-cell division (RND) (TC 2.A.6) family. MdtC subfamily. Part of a tripartite efflux system composed of MdtA, MdtB and MdtC. MdtC forms a heteromultimer with MdtB.

It is found in the cell inner membrane. The protein is Multidrug resistance protein MdtC of Salmonella paratyphi C (strain RKS4594).